The chain runs to 294 residues: Phosphatidylserine decarboxylase proenzyme (294 aa).

Active-site charge relay system; for autoendoproteolytic cleavage activity residues include aspartate 113, histidine 169, and serine 256. Serine 256 acts as the Schiff-base intermediate with substrate; via pyruvic acid; for decarboxylase activity in catalysis. Serine 256 carries the post-translational modification Pyruvic acid (Ser); by autocatalysis.

This sequence belongs to the phosphatidylserine decarboxylase family. PSD-B subfamily. Prokaryotic type II sub-subfamily. In terms of assembly, heterodimer of a large membrane-associated beta subunit and a small pyruvoyl-containing alpha subunit. Pyruvate serves as cofactor. Post-translationally, is synthesized initially as an inactive proenzyme. Formation of the active enzyme involves a self-maturation process in which the active site pyruvoyl group is generated from an internal serine residue via an autocatalytic post-translational modification. Two non-identical subunits are generated from the proenzyme in this reaction, and the pyruvate is formed at the N-terminus of the alpha chain, which is derived from the carboxyl end of the proenzyme. The autoendoproteolytic cleavage occurs by a canonical serine protease mechanism, in which the side chain hydroxyl group of the serine supplies its oxygen atom to form the C-terminus of the beta chain, while the remainder of the serine residue undergoes an oxidative deamination to produce ammonia and the pyruvoyl prosthetic group on the alpha chain. During this reaction, the Ser that is part of the protease active site of the proenzyme becomes the pyruvoyl prosthetic group, which constitutes an essential element of the active site of the mature decarboxylase.

It is found in the cell membrane. It carries out the reaction a 1,2-diacyl-sn-glycero-3-phospho-L-serine + H(+) = a 1,2-diacyl-sn-glycero-3-phosphoethanolamine + CO2. The protein operates within phospholipid metabolism; phosphatidylethanolamine biosynthesis; phosphatidylethanolamine from CDP-diacylglycerol: step 2/2. Functionally, catalyzes the formation of phosphatidylethanolamine (PtdEtn) from phosphatidylserine (PtdSer). The protein is Phosphatidylserine decarboxylase proenzyme of Clostridium perfringens (strain ATCC 13124 / DSM 756 / JCM 1290 / NCIMB 6125 / NCTC 8237 / Type A).